Here is a 445-residue protein sequence, read N- to C-terminus: UPF0210 protein SPG_0223 (445 aa).

Belongs to the UPF0210 family. In terms of assembly, homodimer.

This is UPF0210 protein SPG_0223 from Streptococcus pneumoniae serotype 19F (strain G54).